The following is a 284-amino-acid chain: Tropomyosin beta chain (284 aa).

N-acetylmethionine is present on Met1. The tract at residues 1-65 (MDAIKKKMQM…EVEKYSESVK (65 aa)) is disordered. A coiled-coil region spans residues 1 to 284 (MDAIKKKMQM…DNALNDITSL (284 aa)). Basic and acidic residues-rich tracts occupy residues 12–40 (KLDKENAIDRAEQAEADKKQAEDRCKQLE) and 51–65 (KGTEDEVEKYSESVK). A Phosphothreonine modification is found at Thr53. Ser61 is modified (phosphoserine; by PIK3CG). Phosphothreonine is present on Thr79. Ser87 carries the post-translational modification Phosphoserine. Residue Thr108 is modified to Phosphothreonine. The disordered stretch occupies residues 117–136 (EKAADESERGMKVIENRAMK). 3 positions are modified to phosphoserine: Ser158, Ser206, and Ser215. The residue at position 252 (Thr252) is a Phosphothreonine. Position 261 is a phosphotyrosine (Tyr261). At Ser271 the chain carries Phosphoserine. Thr282 is modified (phosphothreonine). Ser283 is subject to Phosphoserine.

This sequence belongs to the tropomyosin family. As to quaternary structure, homodimer. Heterodimer of an alpha (TPM1, TPM3 or TPM4) and a beta (TPM2) chain. Post-translationally, phosphorylated on Ser-61 by PIK3CG. Phosphorylation on Ser-61 is required for ADRB2 internalization. As to expression, present in primary breast cancer tissue, absent from normal breast tissue.

It localises to the cytoplasm. Its subcellular location is the cytoskeleton. Functionally, binds to actin filaments in muscle and non-muscle cells. Plays a central role, in association with the troponin complex, in the calcium dependent regulation of vertebrate striated muscle contraction. Smooth muscle contraction is regulated by interaction with caldesmon. In non-muscle cells is implicated in stabilizing cytoskeleton actin filaments. The non-muscle isoform may have a role in agonist-mediated receptor internalization. This is Tropomyosin beta chain (TPM2) from Homo sapiens (Human).